The following is a 69-amino-acid chain: Large ribosomal subunit protein bL31 (69 aa).

Residues Cys16, Cys18, Cys37, and Cys40 each coordinate Zn(2+).

It belongs to the bacterial ribosomal protein bL31 family. Type A subfamily. In terms of assembly, part of the 50S ribosomal subunit. Requires Zn(2+) as cofactor.

In terms of biological role, binds the 23S rRNA. This chain is Large ribosomal subunit protein bL31, found in Teredinibacter turnerae (strain ATCC 39867 / T7901).